The sequence spans 1053 residues: Carbamoyl phosphate synthase large chain (1053 aa).

Residues 1-397 (MPKNTSLKKV…GFKKALRSLD (397 aa)) form a carboxyphosphate synthetic domain region. Positions 127, 167, 173, 174, 206, 208, 213, 239, 240, 241, 282, and 294 each coordinate ATP. Residues 131 to 323 (KKLMLEIGEP…IARVAAKVAI (193 aa)) enclose the ATP-grasp 1 domain. Gln-282, Glu-294, and Asn-296 together coordinate Mg(2+). Mn(2+) contacts are provided by Gln-282, Glu-294, and Asn-296. Positions 398-530 (TDIYRHTDLN…YSTWEQECEL (133 aa)) are oligomerization domain. The carbamoyl phosphate synthetic domain stretch occupies residues 531–919 (TQSDRKKILI…YKASQAADNT (389 aa)). In terms of domain architecture, ATP-grasp 2 spans 661 to 852 (SVLLDQNNIP…LAKIAAKLML (192 aa)). The ATP site is built by Arg-697, Arg-736, Leu-738, Glu-743, Gly-768, Val-769, His-770, Ser-771, Gln-811, and Glu-823. 3 residues coordinate Mg(2+): Gln-811, Glu-823, and Asn-825. Gln-811, Glu-823, and Asn-825 together coordinate Mn(2+). The 136-residue stretch at 918–1053 (NTIPLKGNVF…TVEPLSHYHS (136 aa)) folds into the MGS-like domain. The segment at 920 to 1053 (IPLKGNVFIS…TVEPLSHYHS (134 aa)) is allosteric domain.

Belongs to the CarB family. As to quaternary structure, composed of two chains; the small (or glutamine) chain promotes the hydrolysis of glutamine to ammonia, which is used by the large (or ammonia) chain to synthesize carbamoyl phosphate. Tetramer of heterodimers (alpha,beta)4. The cofactor is Mg(2+). Mn(2+) is required as a cofactor.

The enzyme catalyses hydrogencarbonate + L-glutamine + 2 ATP + H2O = carbamoyl phosphate + L-glutamate + 2 ADP + phosphate + 2 H(+). The catalysed reaction is hydrogencarbonate + NH4(+) + 2 ATP = carbamoyl phosphate + 2 ADP + phosphate + 2 H(+). It participates in amino-acid biosynthesis; L-arginine biosynthesis; carbamoyl phosphate from bicarbonate: step 1/1. Its pathway is pyrimidine metabolism; UMP biosynthesis via de novo pathway; (S)-dihydroorotate from bicarbonate: step 1/3. Its function is as follows. Large subunit of the glutamine-dependent carbamoyl phosphate synthetase (CPSase). CPSase catalyzes the formation of carbamoyl phosphate from the ammonia moiety of glutamine, carbonate, and phosphate donated by ATP, constituting the first step of 2 biosynthetic pathways, one leading to arginine and/or urea and the other to pyrimidine nucleotides. The large subunit (synthetase) binds the substrates ammonia (free or transferred from glutamine from the small subunit), hydrogencarbonate and ATP and carries out an ATP-coupled ligase reaction, activating hydrogencarbonate by forming carboxy phosphate which reacts with ammonia to form carbamoyl phosphate. This Methanocorpusculum labreanum (strain ATCC 43576 / DSM 4855 / Z) protein is Carbamoyl phosphate synthase large chain.